Consider the following 127-residue polypeptide: Protein ApaG (127 aa).

The 125-residue stretch at Glu-3 to His-127 folds into the ApaG domain.

The protein is Protein ApaG of Thiobacillus denitrificans (strain ATCC 25259 / T1).